The chain runs to 347 residues: UDP-N-acetylenolpyruvoylglucosamine reductase (347 aa).

Positions 24 to 195 constitute an FAD-binding PCMH-type domain; that stretch reads FDARARVAAR…VAVTFRLPKA (172 aa). Residue arginine 171 is part of the active site. Catalysis depends on serine 247, which acts as the Proton donor. The active site involves glutamate 343.

This sequence belongs to the MurB family. The cofactor is FAD.

Its subcellular location is the cytoplasm. It catalyses the reaction UDP-N-acetyl-alpha-D-muramate + NADP(+) = UDP-N-acetyl-3-O-(1-carboxyvinyl)-alpha-D-glucosamine + NADPH + H(+). Its pathway is cell wall biogenesis; peptidoglycan biosynthesis. Its function is as follows. Cell wall formation. The sequence is that of UDP-N-acetylenolpyruvoylglucosamine reductase from Burkholderia pseudomallei (strain 668).